The sequence spans 406 residues: Formate-dependent phosphoribosylglycinamide formyltransferase (406 aa).

N(1)-(5-phospho-beta-D-ribosyl)glycinamide contacts are provided by residues glutamate 28–leucine 29 and glutamate 88. ATP-binding positions include arginine 121, lysine 162, serine 167–glutamine 172, glutamate 202–isoleucine 205, and glutamate 210. In terms of domain architecture, ATP-grasp spans arginine 126–leucine 320. Residues glutamate 279 and glutamate 291 each contribute to the Mg(2+) site. Residues aspartate 298, lysine 367, and arginine 374 to arginine 375 contribute to the N(1)-(5-phospho-beta-D-ribosyl)glycinamide site.

It belongs to the PurK/PurT family. In terms of assembly, homodimer.

The enzyme catalyses N(1)-(5-phospho-beta-D-ribosyl)glycinamide + formate + ATP = N(2)-formyl-N(1)-(5-phospho-beta-D-ribosyl)glycinamide + ADP + phosphate + H(+). The protein operates within purine metabolism; IMP biosynthesis via de novo pathway; N(2)-formyl-N(1)-(5-phospho-D-ribosyl)glycinamide from N(1)-(5-phospho-D-ribosyl)glycinamide (formate route): step 1/1. Its function is as follows. Involved in the de novo purine biosynthesis. Catalyzes the transfer of formate to 5-phospho-ribosyl-glycinamide (GAR), producing 5-phospho-ribosyl-N-formylglycinamide (FGAR). Formate is provided by PurU via hydrolysis of 10-formyl-tetrahydrofolate. This chain is Formate-dependent phosphoribosylglycinamide formyltransferase, found in Janthinobacterium sp. (strain Marseille) (Minibacterium massiliensis).